A 367-amino-acid chain; its full sequence is Probable butyrate kinase (367 aa).

Belongs to the acetokinase family.

The protein localises to the cytoplasm. It carries out the reaction butanoate + ATP = butanoyl phosphate + ADP. This Exiguobacterium sibiricum (strain DSM 17290 / CCUG 55495 / CIP 109462 / JCM 13490 / 255-15) protein is Probable butyrate kinase.